Here is a 764-residue protein sequence, read N- to C-terminus: Mitogen-activated protein kinase kinase kinase 1b (764 aa).

4 disordered regions span residues 1–81, 120–260, 325–348, and 360–392; these read MVEE…IQQQ, KSIA…TATR, PNLAEEAESSAKPESSAIPDSSAM, and VPELSAKPESNAKPESEPEQDSSVEARTEHYGS. Residues 14 to 30 are compositionally biased toward gly residues; the sequence is GSWGSGEDGGSSHGGKG. 2 stretches are compositionally biased toward low complexity: residues 60-76 and 125-135; these read VHSTSSSGSRRNPLSKS and SQPLSSPSLSQ. Over residues 136–145 the composition is skewed to basic and acidic residues; that stretch reads EHGEASHSND. Positions 184–201 are enriched in polar residues; it reads YVNSQPQNHYGRKNSPSQ. The Protein kinase domain maps to 431–684; it reads WFKGDFIGSG…CDMLLTHPFI (254 aa). ATP contacts are provided by residues 437 to 445 and lysine 459; that span reads IGSGTFGSV. Catalysis depends on aspartate 554, which acts as the Proton acceptor. The segment at 706 to 764 is disordered; it reads EERSIDVSESPSIATSSQSGSSPSVAGDAVSPASVAVRPRSMRTLRSEFSMSSPESIAS. The segment covering 715 to 729 has biased composition (low complexity); sequence SPSIATSSQSGSSPS. Residues 752–764 show a composition bias toward polar residues; that stretch reads SEFSMSSPESIAS.

The protein belongs to the protein kinase superfamily. STE Ser/Thr protein kinase family. MAP kinase kinase kinase subfamily.

Its subcellular location is the cell membrane. The catalysed reaction is L-seryl-[protein] + ATP = O-phospho-L-seryl-[protein] + ADP + H(+). The enzyme catalyses L-threonyl-[protein] + ATP = O-phospho-L-threonyl-[protein] + ADP + H(+). In terms of biological role, the CERK1, MEKK1a/b, MKK1a/b/c and MPK4a/b proteins are involved in pathogen defense. The pathway induces rapid growth inhibition, cell wall depositions and accumulation of defense-related transcripts. This protein is required for responses to chitin and acts redundantly with MEKK1a. The sequence is that of Mitogen-activated protein kinase kinase kinase 1b (MEKK1b) from Physcomitrium patens (Spreading-leaved earth moss).